The sequence spans 426 residues: Enolase (426 aa).

Glutamine 165 is a (2R)-2-phosphoglycerate binding site. The active-site Proton donor is the glutamate 209. 3 residues coordinate Mg(2+): aspartate 244, glutamate 287, and aspartate 313. (2R)-2-phosphoglycerate contacts are provided by lysine 338, arginine 367, serine 368, and lysine 389. The active-site Proton acceptor is the lysine 338.

It belongs to the enolase family. Requires Mg(2+) as cofactor.

It is found in the cytoplasm. The protein localises to the secreted. Its subcellular location is the cell surface. The catalysed reaction is (2R)-2-phosphoglycerate = phosphoenolpyruvate + H2O. It functions in the pathway carbohydrate degradation; glycolysis; pyruvate from D-glyceraldehyde 3-phosphate: step 4/5. Functionally, catalyzes the reversible conversion of 2-phosphoglycerate (2-PG) into phosphoenolpyruvate (PEP). It is essential for the degradation of carbohydrates via glycolysis. In Methanococcus vannielii (strain ATCC 35089 / DSM 1224 / JCM 13029 / OCM 148 / SB), this protein is Enolase.